The sequence spans 300 residues: NAD kinase (300 aa).

Asp75 (proton acceptor) is an active-site residue. NAD(+) is bound by residues 75–76 (DG), 149–150 (ND), Arg177, Asp179, 190–195 (TAYALS), Ala214, and Gln248.

It belongs to the NAD kinase family. The cofactor is a divalent metal cation.

It localises to the cytoplasm. The catalysed reaction is NAD(+) + ATP = ADP + NADP(+) + H(+). Its function is as follows. Involved in the regulation of the intracellular balance of NAD and NADP, and is a key enzyme in the biosynthesis of NADP. Catalyzes specifically the phosphorylation on 2'-hydroxyl of the adenosine moiety of NAD to yield NADP. This Burkholderia cenocepacia (strain ATCC BAA-245 / DSM 16553 / LMG 16656 / NCTC 13227 / J2315 / CF5610) (Burkholderia cepacia (strain J2315)) protein is NAD kinase.